The sequence spans 504 residues: Probable cytosol aminopeptidase (504 aa).

Lysine 276 and aspartate 281 together coordinate Mn(2+). Lysine 288 is a catalytic residue. Positions 299, 358, and 360 each coordinate Mn(2+). Arginine 362 is an active-site residue.

Belongs to the peptidase M17 family. The cofactor is Mn(2+).

It localises to the cytoplasm. The catalysed reaction is Release of an N-terminal amino acid, Xaa-|-Yaa-, in which Xaa is preferably Leu, but may be other amino acids including Pro although not Arg or Lys, and Yaa may be Pro. Amino acid amides and methyl esters are also readily hydrolyzed, but rates on arylamides are exceedingly low.. The enzyme catalyses Release of an N-terminal amino acid, preferentially leucine, but not glutamic or aspartic acids.. Functionally, presumably involved in the processing and regular turnover of intracellular proteins. Catalyzes the removal of unsubstituted N-terminal amino acids from various peptides. In Bordetella avium (strain 197N), this protein is Probable cytosol aminopeptidase.